The following is a 104-amino-acid chain: Large ribosomal subunit protein bL21 (104 aa).

The protein belongs to the bacterial ribosomal protein bL21 family. In terms of assembly, part of the 50S ribosomal subunit. Contacts protein L20.

Its function is as follows. This protein binds to 23S rRNA in the presence of protein L20. The sequence is that of Large ribosomal subunit protein bL21 from Streptococcus equi subsp. equi (strain 4047).